A 126-amino-acid chain; its full sequence is Nucleoside diphosphate kinase B (126 aa).

5 residues coordinate ATP: K6, F37, T68, R79, and N89. The active-site Pros-phosphohistidine intermediate is the H92.

The protein belongs to the NDK family. Mg(2+) serves as cofactor.

It is found in the cytoplasm. Its subcellular location is the nucleus. The protein localises to the cell projection. The protein resides in the lamellipodium. It localises to the ruffle. The catalysed reaction is a 2'-deoxyribonucleoside 5'-diphosphate + ATP = a 2'-deoxyribonucleoside 5'-triphosphate + ADP. It carries out the reaction a ribonucleoside 5'-diphosphate + ATP = a ribonucleoside 5'-triphosphate + ADP. Functionally, major role in the synthesis of nucleoside triphosphates other than ATP. This Macruronus magellanicus (Patagonian grenadier) protein is Nucleoside diphosphate kinase B (nme2).